The primary structure comprises 292 residues: MADTIFGSGCDQWVCPNDRQLALRAKLHTGWSVHTYQTEKQRKSQSLSPAEVEAILQVIQRAERLDILEQQRVGRLVERLETMRRNVMGNGLSQCLLCGEVLGFLGSSSVFCKDCRKKVCTKCGIEASPSQKRPLWLCKICSEQREVWKRSGAWFYKGIPKFILPLKIPGQADHPSFRPLPVEPAEQEPRSTETSRVYTWARGRVVSSDSDSDSDLSSSSLDDRLRPAGVRDPKGNKPWGESGGSVESLKMGPTRPASCLSGSQSSLASETGTGSADPQGGPRTLAGPRGPR.

A RabBD domain is found at 41–158; sequence QRKSQSLSPA…KRSGAWFYKG (118 aa). Residues 89–146 form an FYVE-type zinc finger; the sequence is GNGLSQCLLCGEVLGFLGSSSVFCKDCRKKVCTKCGIEASPSQKRPLWLCKICSEQRE. Zn(2+)-binding residues include Cys-95, Cys-98, Cys-112, Cys-115, Cys-120, Cys-123, Cys-138, and Cys-141. Residues 175-292 are disordered; the sequence is PSFRPLPVEP…RTLAGPRGPR (118 aa). The span at 221–235 shows a compositional bias: basic and acidic residues; that stretch reads LDDRLRPAGVRDPKG. Ser-248 carries the post-translational modification Phosphoserine. The segment covering 257 to 269 has biased composition (low complexity); that stretch reads ASCLSGSQSSLAS.

As to quaternary structure, recruited to dense-core vesicles through specific interaction with RAB27A in endocrine cells. Interacts with RAB3A, RAB3B, RAB3C and RAB3D. Interacts with ZYX.

Its subcellular location is the cytoplasm. It localises to the cytoplasmic vesicle. It is found in the secretory vesicle membrane. Its function is as follows. Rab GTPase effector involved in the late steps of regulated exocytosis, both in endocrine and exocrine cells. The polypeptide is Rab effector Noc2 (RPH3AL) (Bos taurus (Bovine)).